The chain runs to 114 residues: Gas vesicle protein J1 (114 aa).

The interval 13–22 (LAEMLEMLLD) is alpha helix 1. Beta-strand regions lie at residues 25–35 (VVVNADIAVSV) and 40–50 (LLGIELRAAIA). The Conserved in GvpM1/2 but not GvpA motif lies at 46 to 50 (RAAIA). 3 alpha helix regions span residues 52-72 (FETAAEYGLEFPTGTDMERVE), 78-87 (SPDQSDPASE), and 95-105 (TNPLSDDSTPT). The segment at 63–114 (PTGTDMERVESAANISPDQSDPASETQSETESTNPLSDDSTPTASTSAEETK) is disordered. The segment covering 75-98 (ANISPDQSDPASETQSETESTNPL) has biased composition (polar residues). Over residues 99–114 (SDDSTPTASTSAEETK) the composition is skewed to low complexity.

It belongs to the gas vesicle GvpA family. In terms of assembly, gvpF to GvpM interact with each other in vitro, and may form multi-subunit complex(es). Interacts with GvpA1.

The protein resides in the gas vesicle. In terms of biological role, proteins GvpF to GvpM might be involved in nucleating gas vesicle formation. Mutagenesis of residues 13-61 shows that almost none of them can be substituted and still make gas vesicles. A minor component of the gas vesicle. Gas vesicles are hollow, gas filled proteinaceous nanostructures found in several microbial planktonic microorganisms. They allow positioning of halobacteria at the optimal depth for growth in the poorly aerated, shallow brine pools of their habitat. Functionally, expression of a 9.5 kb p-vac DNA fragment containing 2 divergently transcribed regions (gvpD-gvpE-gvpF-gvpG-gvpH-gvpI-gvpJ-gvpK-gvpL-gvpM and gvpA-gvpC-gvpN-gvpO) allows H.volcanii to produce gas vesicles. All site-directed mutagenesis is tested in H.volcanii. A minimal gas vesicle can be made in H.volcanii by gvpA1-gvpO1 plus gvpF1-gvpG1-gvpJ1-gvpK1-gvpL1-gvpM1; lack of enough GvpJ1 prevents formation. A similar region restores gas vesicle production in H.halobium without the p-vac locus, but it still has the c-vac locus. This is Gas vesicle protein J1 (gvpJ11) from Halobacterium salinarum (strain ATCC 700922 / JCM 11081 / NRC-1) (Halobacterium halobium).